The primary structure comprises 81 residues: Photosystem I iron-sulfur center (81 aa).

4Fe-4S ferredoxin-type domains lie at 2-31 (SHTV…MAPW) and 39-68 (VASA…VRVY). [4Fe-4S] cluster-binding residues include Cys11, Cys14, Cys17, Cys21, Cys48, Cys51, Cys54, and Cys58.

In terms of assembly, the eukaryotic PSI reaction center is composed of at least 11 subunits. Requires [4Fe-4S] cluster as cofactor.

It localises to the plastid. The protein localises to the chloroplast thylakoid membrane. It catalyses the reaction reduced [plastocyanin] + hnu + oxidized [2Fe-2S]-[ferredoxin] = oxidized [plastocyanin] + reduced [2Fe-2S]-[ferredoxin]. Its function is as follows. Apoprotein for the two 4Fe-4S centers FA and FB of photosystem I (PSI); essential for photochemical activity. FB is the terminal electron acceptor of PSI, donating electrons to ferredoxin. The C-terminus interacts with PsaA/B/D and helps assemble the protein into the PSI complex. Required for binding of PsaD and PsaE to PSI. PSI is a plastocyanin/cytochrome c6-ferredoxin oxidoreductase, converting photonic excitation into a charge separation, which transfers an electron from the donor P700 chlorophyll pair to the spectroscopically characterized acceptors A0, A1, FX, FA and FB in turn. The chain is Photosystem I iron-sulfur center from Tupiella akineta (Green alga).